We begin with the raw amino-acid sequence, 321 residues long: Gap junction delta-2 protein (321 aa).

Residues 1–19 (MGEWTILERLLEAAVQQHS) are Cytoplasmic-facing. Residues 20–42 (TMIGRILLTVVVIFRILIVAIVG) form a helical membrane-spanning segment. At 43–75 (ETVYDDEQTMFVCNTLQPGCNQACYDRAFPISH) the chain is on the extracellular side. A helical membrane pass occupies residues 76-98 (IRYWVFQIIMVCTPSLCFITYSV). Over 99 to 197 (HQSAKQRERR…KLRRQEGISR (99 aa)) the chain is Cytoplasmic. Residues 118-141 (RDPPESIGGPGGTGGGGSGGGKRE) are disordered. The segment covering 125–137 (GGPGGTGGGGSGG) has biased composition (gly residues). A helical transmembrane segment spans residues 198-220 (FYIIQVVFRNALEIGFLVGQYFL). Residues 221 to 252 (YGFSVPGLYECNRYPCIKEVECYVSRPTEKTV) are Extracellular-facing. The chain crosses the membrane as a helical span at residues 253-275 (FLVFMFAVSGICVVLNLAELNHL). The Cytoplasmic portion of the chain corresponds to 276-321 (GWRKIKLAVRGAQAKRKSIYEIRNKDLPRVSVPNFGRTQSSDSAYV).

This sequence belongs to the connexin family. Delta-type subfamily. A connexon is composed of a hexamer of connexins. Highly expressed in neurons.

The protein localises to the cell membrane. It is found in the cell junction. Its subcellular location is the gap junction. Functionally, one gap junction consists of a cluster of closely packed pairs of transmembrane channels, the connexons, through which materials of low MW diffuse from one cell to a neighboring cell. The protein is Gap junction delta-2 protein (GJD2) of Homo sapiens (Human).